Consider the following 61-residue polypeptide: Small ribosomal subunit protein uS14B (61 aa).

Positions 24, 27, 40, and 43 each coordinate Zn(2+).

It belongs to the universal ribosomal protein uS14 family. Zinc-binding uS14 subfamily. In terms of assembly, part of the 30S ribosomal subunit. Contacts proteins S3 and S10. Zn(2+) is required as a cofactor.

In terms of biological role, binds 16S rRNA, required for the assembly of 30S particles and may also be responsible for determining the conformation of the 16S rRNA at the A site. The protein is Small ribosomal subunit protein uS14B of Kineococcus radiotolerans (strain ATCC BAA-149 / DSM 14245 / SRS30216).